The primary structure comprises 1336 residues: Aldehyde oxidase 4 (1336 aa).

The region spanning 8–95 is the 2Fe-2S ferredoxin-type domain; that stretch reads DELIFFVNGK…GAAITTVEGV (88 aa). [2Fe-2S] cluster is bound by residues Cys47, Cys52, Cys55, and Cys77. Mo-molybdopterin is bound at residue Gln116. [2Fe-2S] cluster contacts are provided by Cys117, Cys120, Cys152, and Cys154. Cys154 serves as a coordination point for Mo-molybdopterin. The region spanning 237-423 is the FAD-binding PCMH-type domain; sequence FQGKRTTWII…LSIFIPYTAQ (187 aa). Residues 265–272, Ala346, Thr355, His359, Asp368, and Ile413 each bind FAD; that span reads LVMGNTTV. Residues 804-805, Leu1045, 1086-1089, Gln1201, and Leu1265 each bind Mo-molybdopterin; these read AF and GSMG. Glu1267 (proton acceptor; for azaheterocycle hydroxylase activity) is an active-site residue.

It belongs to the xanthine dehydrogenase family. In terms of assembly, homodimer. [2Fe-2S] cluster is required as a cofactor. FAD serves as cofactor. Requires Mo-molybdopterin as cofactor. In terms of tissue distribution, highly expressed in Harderian glands and sebaceous glands with detectable levels in the epidermis and other keratinized epithelia (at protein level). Detected in testis. The expression is 3 times greater in females than in males.

Its subcellular location is the cytoplasm. The catalysed reaction is an aldehyde + O2 + H2O = a carboxylate + H2O2 + H(+). It carries out the reaction retinal + O2 + H2O = retinoate + H2O2 + H(+). The enzyme catalyses all-trans-retinal + O2 + H2O = all-trans-retinoate + H2O2 + H(+). Its function is as follows. Aldehyde oxidase able to catalyze the oxidation of retinaldehyde into retinoate. Is responsible for the major all-trans-retinaldehyde-metabolizing activity in the Harderian gland, and contributes a significant amount of the same activity in the skin. Is devoid of pyridoxal-oxidizing activity, in contrast to the other aldehyde oxidases. Acts as a negative modulator of the epidermal trophism. May be able to oxidize a wide variety of aldehydes into their corresponding carboxylates and to hydroxylate azaheterocycles. The polypeptide is Aldehyde oxidase 4 (Aox4) (Mus musculus (Mouse)).